The primary structure comprises 226 residues: ATP synthase F(0) complex subunit a (226 aa).

A run of 6 helical transmembrane segments spans residues 6-26 (FAPFITPTILGITTLPIIITF), 68-88 (WTLMLMSLILFIASTNLLGLL), 97-117 (QLSMNIGMAIPLWAGTVIMGF), 138-158 (IPMLIIIETISLFIQPLALAV), 164-184 (ITAGHLLIHLIGSATLALSSI), and 195-215 (ILFLLTLLEIAVAMIQAYVFT).

The protein belongs to the ATPase A chain family. In terms of assembly, component of the ATP synthase complex composed at least of ATP5F1A/subunit alpha, ATP5F1B/subunit beta, ATP5MC1/subunit c (homooctomer), MT-ATP6/subunit a, MT-ATP8/subunit 8, ATP5ME/subunit e, ATP5MF/subunit f, ATP5MG/subunit g, ATP5MK/subunit k, ATP5MJ/subunit j, ATP5F1C/subunit gamma, ATP5F1D/subunit delta, ATP5F1E/subunit epsilon, ATP5PF/subunit F6, ATP5PB/subunit b, ATP5PD/subunit d, ATP5PO/subunit OSCP. ATP synthase complex consists of a soluble F(1) head domain (subunits alpha(3) and beta(3)) - the catalytic core - and a membrane F(0) domain - the membrane proton channel (subunits c, a, 8, e, f, g, k and j). These two domains are linked by a central stalk (subunits gamma, delta, and epsilon) rotating inside the F1 region and a stationary peripheral stalk (subunits F6, b, d, and OSCP). Interacts with DNAJC30; interaction is direct.

It localises to the mitochondrion inner membrane. It catalyses the reaction H(+)(in) = H(+)(out). Functionally, subunit a, of the mitochondrial membrane ATP synthase complex (F(1)F(0) ATP synthase or Complex V) that produces ATP from ADP in the presence of a proton gradient across the membrane which is generated by electron transport complexes of the respiratory chain. ATP synthase complex consist of a soluble F(1) head domain - the catalytic core - and a membrane F(1) domain - the membrane proton channel. These two domains are linked by a central stalk rotating inside the F(1) region and a stationary peripheral stalk. During catalysis, ATP synthesis in the catalytic domain of F(1) is coupled via a rotary mechanism of the central stalk subunits to proton translocation. With the subunit c (ATP5MC1), forms the proton-conducting channel in the F(0) domain, that contains two crucial half-channels (inlet and outlet) that facilitate proton movement from the mitochondrial intermembrane space (IMS) into the matrix. Protons are taken up via the inlet half-channel and released through the outlet half-channel, following a Grotthuss mechanism. This Didelphis virginiana (North American opossum) protein is ATP synthase F(0) complex subunit a.